Here is a 337-residue protein sequence, read N- to C-terminus: MPPKSHKCSRKEGEVEEPLLTENPDRYVIFPIKYPDIWQKYKEAESSIWTVEEIDLGNDMTDWEKLDDGERHFIKHVLAFFAASDGIVLENLAERFMCEVQVPEVRCFYGFQIAMENIHSETYSVLIDTYVVDPDEKQRLLHAIRTIPCIEKKAKWAIEWIGSQTSFPTRLVAFAAVEGIFFSGSFCAIFWLKKRGLMPGLTFSNELISRDEGLHTDFACLLYEKYIVNKLPRDRVLEIICNAVSIEREFICDALPVRLIGMNSQLMTQYIEFVADRLLVSLGYDRHYNSKNPFDFMDMISLQGKTNFFEKKVGEYQKAGVMSSERSSKVFSLDADF.

Asp85, Glu116, and His119 together coordinate Fe cation. Tyr123 is a catalytic residue. Fe cation contacts are provided by Glu178, Glu212, and His215.

This sequence belongs to the ribonucleoside diphosphate reductase small chain family. In terms of assembly, heterodimer of a large and a small subunit. The cofactor is Fe cation.

It carries out the reaction a 2'-deoxyribonucleoside 5'-diphosphate + [thioredoxin]-disulfide + H2O = a ribonucleoside 5'-diphosphate + [thioredoxin]-dithiol. Functionally, provides the precursors necessary for DNA synthesis. Catalyzes the biosynthesis of deoxyribonucleotides from the corresponding ribonucleotides. This Trypanosoma brucei brucei protein is Ribonucleoside-diphosphate reductase small chain (RNR2).